A 129-amino-acid chain; its full sequence is Virion-associated protein (129 aa).

Coiled coils occupy residues methionine 1–leucine 31 and threonine 38–aspartate 59. The capsid binding stretch occupies residues proline 122–phenylalanine 129.

It belongs to the caulimovirus ORF III family. Homotetramer, through coiled-coil domain. Homotrimer when interacts with icosehadral capsid. Interacts with capsid protein, and with Movement protein.

The protein localises to the virion. The protein resides in the host cell junction. It is found in the host plasmodesma. In terms of biological role, plays a role in virus cell-to-cell and plant-to-plant transmission. Interacts with virion icosahedral capsid and movement protein, thereby facilitating virion cell-to-cell transmission through plasmodesmata opened by viral movement protein. Also interacts with aphid transmission factor, attaching the virion to aphid stylet when the animal feeds on an virus infected plant. Aphid saliva may later detach the virion, inducing release of infectious particles when the animal feeds on a new plant. This Arabidopsis thaliana (Mouse-ear cress) protein is Virion-associated protein.